A 288-amino-acid chain; its full sequence is ATP synthase gamma chain (288 aa).

Belongs to the ATPase gamma chain family. As to quaternary structure, F-type ATPases have 2 components, CF(1) - the catalytic core - and CF(0) - the membrane proton channel. CF(1) has five subunits: alpha(3), beta(3), gamma(1), delta(1), epsilon(1). CF(0) has three main subunits: a, b and c.

It localises to the cell inner membrane. In terms of biological role, produces ATP from ADP in the presence of a proton gradient across the membrane. The gamma chain is believed to be important in regulating ATPase activity and the flow of protons through the CF(0) complex. The protein is ATP synthase gamma chain of Rickettsia bellii (strain RML369-C).